We begin with the raw amino-acid sequence, 422 residues long: UDP-N-acetyl-D-glucosamine 6-dehydrogenase (422 aa).

V14, D32, R37, T83, and T118 together coordinate NAD(+). C258 acts as the Nucleophile in catalysis. R329 serves as a coordination point for NAD(+).

The protein belongs to the UDP-glucose/GDP-mannose dehydrogenase family.

The enzyme catalyses UDP-N-acetyl-alpha-D-glucosamine + 2 NAD(+) + H2O = UDP-2-acetamido-2-deoxy-alpha-D-glucuronate + 2 NADH + 3 H(+). The protein operates within bacterial outer membrane biogenesis; LPS O-antigen biosynthesis. Requires either potassium or ammonium-containing salts for activity. In terms of biological role, dehydrogenase required for the biosynthesis of the B-band O antigen of serotype O6 lipopolysaccharide. Is also required for flagellin glycosylation. Catalyzes the conversion of UDP-N-acetylglucosamine (UDP-GlcNAc) to UDP-N-acetylglucosaminuronic acid (UDP-GlcNAcA). Can also catalyze the conversion of UDP-N-acetyl-galactosamine (UDP-GalNAc) to UDP-N-acetylgalactosaminuronic acid (UDP-GalNAcA), with low efficiency. Can use NAD(+) or NADP(+), with a preference for NAD(+). The chain is UDP-N-acetyl-D-glucosamine 6-dehydrogenase from Pseudomonas aeruginosa.